The chain runs to 276 residues: Hydroxymethylpyrimidine/phosphomethylpyrimidine kinase (276 aa).

Gln45 is a 4-amino-5-hydroxymethyl-2-methylpyrimidine binding site.

The protein belongs to the ThiD family.

The enzyme catalyses 4-amino-5-hydroxymethyl-2-methylpyrimidine + ATP = 4-amino-2-methyl-5-(phosphooxymethyl)pyrimidine + ADP + H(+). It carries out the reaction 4-amino-2-methyl-5-(phosphooxymethyl)pyrimidine + ATP = 4-amino-2-methyl-5-(diphosphooxymethyl)pyrimidine + ADP. It functions in the pathway cofactor biosynthesis; thiamine diphosphate biosynthesis; 4-amino-2-methyl-5-diphosphomethylpyrimidine from 5-amino-1-(5-phospho-D-ribosyl)imidazole: step 2/3. Its pathway is cofactor biosynthesis; thiamine diphosphate biosynthesis; 4-amino-2-methyl-5-diphosphomethylpyrimidine from 5-amino-1-(5-phospho-D-ribosyl)imidazole: step 3/3. In terms of biological role, catalyzes the phosphorylation of hydroxymethylpyrimidine phosphate (HMP-P) to HMP-PP, and of HMP to HMP-P. This Staphylococcus aureus (strain MRSA252) protein is Hydroxymethylpyrimidine/phosphomethylpyrimidine kinase (thiD).